A 326-amino-acid chain; its full sequence is Adenosine receptor A1 (326 aa).

Topologically, residues methionine 1 to alanine 10 are extracellular. Residues alanine 11–alanine 33 traverse the membrane as a helical segment. The Cytoplasmic portion of the chain corresponds to valine 34–cysteine 46. Residues phenylalanine 47–isoleucine 69 traverse the membrane as a helical segment. At asparagine 70–cysteine 80 the chain is on the extracellular side. Cysteine 80 and cysteine 169 are oxidised to a cystine. Residues leucine 81–alanine 102 traverse the membrane as a helical segment. At valine 103 to arginine 123 the chain is on the cytoplasmic side. Residues alanine 124 to tryptophan 146 form a helical membrane-spanning segment. Over asparagine 147 to serine 176 the chain is Extracellular. Asparagine 148 and asparagine 159 each carry an N-linked (GlcNAc...) asparagine glycan. The chain crosses the membrane as a helical span at residues methionine 177–leucine 201. Topologically, residues glutamate 202–serine 235 are cytoplasmic. A helical membrane pass occupies residues leucine 236–phenylalanine 259. At cysteine 260–serine 267 the chain is on the extracellular side. Residues isoleucine 268–isoleucine 292 form a helical membrane-spanning segment. Residues histidine 293–aspartate 326 are Cytoplasmic-facing. Cysteine 309 carries the S-palmitoyl cysteine lipid modification.

The protein belongs to the G-protein coupled receptor 1 family. As to expression, widely expressed in brain and spinal cord.

It is found in the cell membrane. Its function is as follows. Receptor for adenosine. The activity of this receptor is mediated by G proteins which inhibit adenylyl cyclase. This is Adenosine receptor A1 (Adora1) from Rattus norvegicus (Rat).